The chain runs to 209 residues: Kynurenine formamidase (209 aa).

Tryptophan 20 provides a ligand contact to substrate. Positions 50, 54, and 56 each coordinate Zn(2+). The active-site Proton donor/acceptor is the histidine 60. Residues histidine 161 and glutamate 173 each contribute to the Zn(2+) site.

Belongs to the Cyclase 1 superfamily. KynB family. In terms of assembly, homodimer. The cofactor is Zn(2+).

It catalyses the reaction N-formyl-L-kynurenine + H2O = L-kynurenine + formate + H(+). The protein operates within amino-acid degradation; L-tryptophan degradation via kynurenine pathway; L-kynurenine from L-tryptophan: step 2/2. Catalyzes the hydrolysis of N-formyl-L-kynurenine to L-kynurenine, the second step in the kynurenine pathway of tryptophan degradation. The polypeptide is Kynurenine formamidase (Bacillus mycoides (strain KBAB4) (Bacillus weihenstephanensis)).